We begin with the raw amino-acid sequence, 519 residues long: Xylose import ATP-binding protein XylG (519 aa).

ABC transporter domains are found at residues 6–245 (MTMR…VGRE) and 262–507 (FEAR…IRPV). Residue 38–45 (GENGAGKS) coordinates ATP.

The protein belongs to the ABC transporter superfamily. Xylose importer (TC 3.A.1.2.4) family. In terms of assembly, the complex is composed of two ATP-binding proteins (XylG), two transmembrane proteins (XylH) and a solute-binding protein (XylF).

It localises to the cell inner membrane. The enzyme catalyses D-xylose(out) + ATP + H2O = D-xylose(in) + ADP + phosphate + H(+). Part of the ABC transporter complex XylFGH involved in xylose import. Responsible for energy coupling to the transport system. The chain is Xylose import ATP-binding protein XylG from Paraburkholderia xenovorans (strain LB400).